The primary structure comprises 805 residues: Angiotensin-converting enzyme 2 (805 aa).

A signal peptide spans 1 to 17; sequence MSGSFWLLLSFAALTAA. The Extracellular portion of the chain corresponds to 18 to 740; that stretch reads QSTTEELAKT…LSPPYRPPVT (723 aa). A Peptidase M2 domain is found at 19–607; it reads STTEELAKTF…QNRNSFVGWD (589 aa). The segment at 30-41 is interaction with SARS S protein; sequence ETFNYEAQELSY. Asparagine 53 carries N-linked (GlcNAc...) asparagine glycosylation. Interaction with SARS S protein regions lie at residues 82–84 and 90–93; these read TYP and DAKI. Cysteines 133 and 141 form a disulfide. Residue arginine 169 participates in chloride binding. Residue asparagine 216 is glycosylated (N-linked (GlcNAc...) asparagine). Arginine 273 serves as a coordination point for substrate. A glycan (N-linked (GlcNAc...) asparagine) is linked at asparagine 322. Cysteine 344 and cysteine 361 are oxidised to a cystine. Residue 345-346 coordinates substrate; the sequence is HP. The interval 353–357 is interaction with SARS S protein; it reads KGDFR. Histidine 374 contributes to the Zn(2+) binding site. Glutamate 375 functions as the Proton acceptor in the catalytic mechanism. 2 residues coordinate Zn(2+): histidine 378 and glutamate 402. Tryptophan 477 and lysine 481 together coordinate chloride. The Proton donor role is filled by histidine 505. Tyrosine 515 contacts substrate. Cysteine 530 and cysteine 542 are oxidised to a cystine. Asparagine 546 is a glycosylation site (N-linked (GlcNAc...) asparagine). The Collectrin-like domain occupies 614 to 805; that stretch reads SDQSIKVRIS…QHADDVQTSF (192 aa). Residues 652–659 are essential for cleavage by ADAM17; it reads REYFSKVK. N-linked (GlcNAc...) asparagine glycans are attached at residues asparagine 660 and asparagine 690. The interval 697–716 is essential for cleavage by TMPRSS11D and TMPRSS2; it reads RSEVEDAIRMSRSRINDAFR. The helical transmembrane segment at 741 to 761 threads the bilayer; it reads IWLIVFGVVMGAIVVGIVLLI. Residues 762–805 lie on the Cytoplasmic side of the membrane; the sequence is VSGIRNRRKNDQAGSEENPYASVDLNKGENNPGFQHADDVQTSF. Positions 771 to 805 are disordered; sequence NDQAGSEENPYASVDLNKGENNPGFQHADDVQTSF. The LIR signature appears at 778 to 786; it reads ENPYASVDL. Tyrosine 781 carries the post-translational modification Phosphotyrosine. An Endocytic sorting signal motif is present at residues 781–784; the sequence is YASV. The SH2-binding signature appears at 781-785; the sequence is YASVD. Serine 783 carries the phosphoserine modification. The PTB motif lies at 792 to 795; that stretch reads NPGF. The PDZ-binding motif lies at 803–805; sequence TSF.

Belongs to the peptidase M2 family. Homodimer. Interacts with the catalytically active form of TMPRSS2. Interacts with SLC6A19; this interaction is essential for expression and function of SLC6A19 in intestine. Interacts with ITGA5:ITGB1. Probably interacts (via endocytic sorting signal motif) with AP2M1; the interaction is inhibited by phosphorylation of Tyr-781. Interacts (via PDZ-binding motif) with NHERF1 (via PDZ domains); the interaction may enhance ACE2 membrane residence. As to quaternary structure, (Microbial infection) Interacts with SARS-CoV S protein. Zn(2+) is required as a cofactor. The cofactor is chloride. Proteolytic cleavage by ADAM17 generates a secreted form. Also cleaved by serine proteases: TMPRSS2, TMPRSS11D and HPN/TMPRSS1. In terms of processing, phosphorylated. Phosphorylation at Tyr-781 probably inhibits interaction with AP2M1 and enables interactions with proteins containing SH2 domains.

The protein resides in the secreted. The protein localises to the cell membrane. It localises to the cytoplasm. It is found in the cell projection. Its subcellular location is the cilium. The protein resides in the apical cell membrane. It catalyses the reaction angiotensin II + H2O = angiotensin-(1-7) + L-phenylalanine. The catalysed reaction is angiotensin I + H2O = angiotensin-(1-9) + L-leucine. Essential counter-regulatory carboxypeptidase of the renin-angiotensin hormone system that is a critical regulator of blood volume, systemic vascular resistance, and thus cardiovascular homeostasis. Converts angiotensin I to angiotensin 1-9, a nine-amino acid peptide with anti-hypertrophic effects in cardiomyocytes, and angiotensin II to angiotensin 1-7, which then acts as a beneficial vasodilator and anti-proliferation agent, counterbalancing the actions of the vasoconstrictor angiotensin II. Also removes the C-terminal residue from three other vasoactive peptides, neurotensin, kinetensin, and des-Arg bradykinin, but is not active on bradykinin. Also cleaves other biological peptides, such as apelins, casomorphins and dynorphin A. Plays an important role in amino acid transport by acting as binding partner of amino acid transporter SLC6A19 in intestine, regulating trafficking, expression on the cell surface, and its catalytic activity. Its function is as follows. (Microbial infection) Acts as a receptor for human coronavirus SARS. In Paguma larvata (Masked palm civet), this protein is Angiotensin-converting enzyme 2 (ACE2).